Here is a 239-residue protein sequence, read N- to C-terminus: Retrotransposon Gag-like protein 6 (239 aa).

Residues 29–69 (LTSLRLTNSALRREASTLRAEKANLTNMLESVMAELTLLRT) are a coiled coil. Residues 82-94 (PISSITSNGTRPM) show a composition bias toward polar residues. Disordered stretches follow at residues 82–106 (PISS…EPFS) and 214–239 (TGPC…ARNL). Low complexity predominate over residues 228-239 (PAPALPARARNL).

It belongs to the LDOC1 family.

This is Retrotransposon Gag-like protein 6 from Homo sapiens (Human).